The chain runs to 342 residues: MHHHLNTLYQGQSLSRESTRDAFGQVVRGEVDPIVLASLLTALKIKGETPEEIAGAAEALLAEARDFPRPDYEFCDIVGTGGDGLNTINVSTTSALVAAACGLKVAKHGNRSVSSKSGSSDLLDKMGIKLDMSPAQARRCLDELGICFLFAPQYHAGVRHAMPVRQALKTRTLFNVLGPLINPARPTYQLMGVYAPELVRPIAETLLALGLKTGMVVHGAGLDEIAIHGPTQVAQIRDGEIREFLLTPADFGLETYPVSAIQGGEPEENRAITAAILEGRGTPAHNAAIAANVAPLLLMAGKAKDLKSAAAEVLAVLASGKTAELAARLATLSHQEASHQEA.

Residues G79, 82–83, T87, 89–92, 107–115, and S119 each bind 5-phospho-alpha-D-ribose 1-diphosphate; these read GD, NVST, and KHGNRSVSS. Anthranilate is bound at residue G79. A Mg(2+)-binding site is contributed by S91. Position 110 (N110) interacts with anthranilate. R165 contributes to the anthranilate binding site. Mg(2+) contacts are provided by D223 and E224.

This sequence belongs to the anthranilate phosphoribosyltransferase family. Homodimer. Requires Mg(2+) as cofactor.

It catalyses the reaction N-(5-phospho-beta-D-ribosyl)anthranilate + diphosphate = 5-phospho-alpha-D-ribose 1-diphosphate + anthranilate. It functions in the pathway amino-acid biosynthesis; L-tryptophan biosynthesis; L-tryptophan from chorismate: step 2/5. In terms of biological role, catalyzes the transfer of the phosphoribosyl group of 5-phosphorylribose-1-pyrophosphate (PRPP) to anthranilate to yield N-(5'-phosphoribosyl)-anthranilate (PRA). The sequence is that of Anthranilate phosphoribosyltransferase from Aeromonas hydrophila subsp. hydrophila (strain ATCC 7966 / DSM 30187 / BCRC 13018 / CCUG 14551 / JCM 1027 / KCTC 2358 / NCIMB 9240 / NCTC 8049).